Reading from the N-terminus, the 231-residue chain is uncharacterized protein (231 aa).

Positions 1-25 are cleaved as a signal peptide; sequence MAKWVPALLLRRVPLFSLRFRPASS. The Extracellular portion of the chain corresponds to 26–200; that stretch reads TFLPVLAATE…SRPSPSATLT (175 aa). Positions 39–64 are disordered; the sequence is SVPSGDLSMPVKTRAEGEDDGFGEAG. The chain crosses the membrane as a helical span at residues 201–225; sequence LLLASSCLLAPAPPSFILLLFTLIA. Topologically, residues 226 to 231 are cytoplasmic; sequence PDLPHS.

Its subcellular location is the membrane. This is an uncharacterized protein from Homo sapiens (Human).